Here is a 219-residue protein sequence, read N- to C-terminus: VQ motif-containing protein 19 (219 aa).

A VQ motif is present at residues 47–56 (FKQVVQMLTG). Positions 52–94 (QMLTGSSSPRSPDSPRPPTTPSGKGNFVIPPIKTAQPKKHSGN) are disordered. 7 positions are modified to phosphoserine: Ser59, Ser65, Ser127, Ser131, Ser139, Ser141, and Ser152. Thr155 bears the Phosphothreonine mark. Disordered stretches follow at residues 156-177 (PLKQ…PLSE) and 190-219 (HRSP…SPEM). Phosphoserine occurs at positions 192 and 195. A phosphothreonine mark is found at Thr196 and Thr211. Phosphoserine occurs at positions 212 and 216.

In terms of processing, phosphorylated on serine and threonine residues by MPK6.

It is found in the nucleus. In terms of biological role, may modulate WRKY transcription factor activities. In Arabidopsis thaliana (Mouse-ear cress), this protein is VQ motif-containing protein 19.